The primary structure comprises 270 residues: Homeobox protein vent1B (270 aa).

Basic and acidic residues-rich tracts occupy residues 17-26 (EEAADGKDSM) and 44-59 (YAKE…DVQE). Disordered stretches follow at residues 17–66 (EEAA…SFQC) and 88–134 (TWGS…LRTA). Positions 89-99 (WGSSDEFSSAG) are enriched in polar residues. Basic and acidic residues predominate over residues 116 to 131 (QDTDHNGKSTKSDRRL). Positions 128–187 (DRRLRTAFSPQQISKLEQAFNKQRYLGASERKKLATSLMLSEIQVKTWFQNRRMKLKRQI) form a DNA-binding region, homeobox.

As to expression, expressed in the ventral marginal zone of gastrulae. At the end of gastrulation, predominantly localized to the ventral region of the closing slit blastopore. At early tail bud stage, expression is maintained only in the forming proctodeum.

It localises to the nucleus. Probable transcription regulator. Acts in a ventral signaling pathway downstream of bmp4 and vent2B. In Xenopus laevis (African clawed frog), this protein is Homeobox protein vent1B (vent1B).